The following is a 121-amino-acid chain: Non-structural protein 8 (121 aa).

A signal peptide spans 1–15; sequence MKLLIVFGLLTSVYC. Residues 19-121 enclose the SARS ORF8 Ig-like domain; that stretch reads ECSIQECCEN…HDVRVVLDFV (103 aa). 3 disulfide bridges follow: cysteine 25–cysteine 90, cysteine 37–cysteine 102, and cysteine 61–cysteine 83.

The chain is Non-structural protein 8 from Bat coronavirus Rp3/2004 (BtCoV/Rp3/2004).